A 407-amino-acid chain; its full sequence is MSSTRVLVLNSGSSSVKYQLIDMRDGERLAAGLVERIGERTSRLRHTLVAAGDTREQEGPIADHEAALKAVAAELGRDGLGLDSPELAAIGHRVVHGGEFFSEPTLIDENVLTEIERLIPVAPLHNPANLTGIRTAQALRPDLPQVAVFDTAFHTTMPESAARYAIDPKIADRYRIRRYGFHGTSHAYVSRETARLLGRAPGDVNVIVLHLGNGASASAVRGGRCVDTSMGLTPLEGLVMGTRSGDMDPAVIFHLMRVGGMSADEIDTLLNKRSGLFGLCGDNDMREIRRRVDEDDEQAGLAFDIYIHRLKKYIGAYYAVLGRVDAVAFTAGVGENSAPVREAAVAGLEGLGLAVDGGLNAVRGDGARLISPAGARVAVAVVPTDEEMEIATQTYALVSESGNPDLT.

Asn-10 is a binding site for Mg(2+). Lys-17 is a binding site for ATP. Arg-93 contributes to the substrate binding site. The active-site Proton donor/acceptor is the Asp-150. ATP-binding positions include 210 to 214, 284 to 286, and 332 to 336; these read HLGNG, DMR, and GVGEN. Glu-386 is a binding site for Mg(2+).

The protein belongs to the acetokinase family. In terms of assembly, homodimer. The cofactor is Mg(2+). It depends on Mn(2+) as a cofactor.

The protein resides in the cytoplasm. The enzyme catalyses acetate + ATP = acetyl phosphate + ADP. The protein operates within metabolic intermediate biosynthesis; acetyl-CoA biosynthesis; acetyl-CoA from acetate: step 1/2. Catalyzes the formation of acetyl phosphate from acetate and ATP. Can also catalyze the reverse reaction. The chain is Acetate kinase from Streptomyces coelicolor (strain ATCC BAA-471 / A3(2) / M145).